We begin with the raw amino-acid sequence, 304 residues long: Probable 5-dehydro-4-deoxyglucarate dehydratase (304 aa).

This sequence belongs to the DapA family.

It carries out the reaction 5-dehydro-4-deoxy-D-glucarate + H(+) = 2,5-dioxopentanoate + CO2 + H2O. It participates in carbohydrate acid metabolism; D-glucarate degradation; 2,5-dioxopentanoate from D-glucarate: step 2/2. In Methylobacterium radiotolerans (strain ATCC 27329 / DSM 1819 / JCM 2831 / NBRC 15690 / NCIMB 10815 / 0-1), this protein is Probable 5-dehydro-4-deoxyglucarate dehydratase.